We begin with the raw amino-acid sequence, 515 residues long: Maturase K (515 aa).

It belongs to the intron maturase 2 family. MatK subfamily.

Its subcellular location is the plastid. The protein localises to the chloroplast. Functionally, usually encoded in the trnK tRNA gene intron. Probably assists in splicing its own and other chloroplast group II introns. The chain is Maturase K from Pinus patula (Mexican weeping pine).